We begin with the raw amino-acid sequence, 146 residues long: Hemoglobin subunit beta (146 aa).

Residue Val-1 is modified to N-acetylvaline. One can recognise a Globin domain in the interval 2–146 (HLTADEKTAV…VANALAHKYH (145 aa)). Thr-12 is modified (phosphothreonine). The residue at position 44 (Ser-44) is a Phosphoserine. An N6-acetyllysine modification is found at Lys-59. His-63 serves as a coordination point for heme b. N6-acetyllysine is present on Lys-82. His-92 is a heme b binding site. The residue at position 93 (Cys-93) is an S-nitrosocysteine. The residue at position 144 (Lys-144) is an N6-acetyllysine.

Belongs to the globin family. In terms of assembly, heterotetramer of two alpha chains and two beta chains. Red blood cells.

Its function is as follows. Involved in oxygen transport from the lung to the various peripheral tissues. In Procyon lotor (Raccoon), this protein is Hemoglobin subunit beta (HBB).